Consider the following 198-residue polypeptide: Protein hunchback (198 aa).

Disordered regions lie at residues 16-117 (SHHH…PMQS) and 152-198 (NDKL…KYMA). Over residues 17–31 (HHHHHHHAHHSHHQH) the composition is skewed to basic residues. Low complexity-rich tracts occupy residues 35–46 (SNSNSNASSPHQ) and 68–83 (QQQQ…QQQQ). Over residues 95-105 (PSPSNNDQNSP) the composition is skewed to polar residues. Basic and acidic residues predominate over residues 179–198 (EPEKEHDLMSNSSEDMKYMA).

This sequence belongs to the hunchback C2H2-type zinc-finger protein family.

The protein localises to the nucleus. Its function is as follows. Gap class segmentation protein that controls development of head structures. The chain is Protein hunchback (hb) from Drosophila disjuncta (Fruit fly).